A 347-amino-acid chain; its full sequence is NADH-quinone oxidoreductase subunit H (347 aa).

The next 8 helical transmembrane spans lie at 21-41, 87-107, 120-140, 160-180, 194-214, 259-279, 282-302, and 324-344; these read IAGILLIALPLMLGVAMIIYA, GLFLIAPIITFTVALMAWAVI, VGLLYVLAISSLGVYGVVIAG, ISYEVSIGFILICVVLWAGTF, WIINGFVANPLLFPMWVMFLI, LLMCALNAVLFWGGYLPPLDI, LYLVPGFVWLLLKILFFFFIF, and VFLPVSLLFVFLVSGYLMATG.

Belongs to the complex I subunit 1 family. NDH-1 is composed of 14 different subunits. Subunits NuoA, H, J, K, L, M, N constitute the membrane sector of the complex.

It is found in the cell inner membrane. The catalysed reaction is a quinone + NADH + 5 H(+)(in) = a quinol + NAD(+) + 4 H(+)(out). Its function is as follows. NDH-1 shuttles electrons from NADH, via FMN and iron-sulfur (Fe-S) centers, to quinones in the respiratory chain. The immediate electron acceptor for the enzyme in this species is believed to be ubiquinone. Couples the redox reaction to proton translocation (for every two electrons transferred, four hydrogen ions are translocated across the cytoplasmic membrane), and thus conserves the redox energy in a proton gradient. This subunit may bind ubiquinone. This chain is NADH-quinone oxidoreductase subunit H, found in Novosphingobium aromaticivorans (strain ATCC 700278 / DSM 12444 / CCUG 56034 / CIP 105152 / NBRC 16084 / F199).